We begin with the raw amino-acid sequence, 336 residues long: Anthranilate phosphoribosyltransferase (336 aa).

5-phospho-alpha-D-ribose 1-diphosphate is bound by residues Gly-79, 82–83, Thr-87, 89–92, 107–115, and Ser-119; these read GD, NIST, and KHGNRAMSS. Residue Gly-79 participates in anthranilate binding. Mg(2+) is bound at residue Ser-91. Asn-110 provides a ligand contact to anthranilate. Arg-165 is a binding site for anthranilate. 2 residues coordinate Mg(2+): Asp-225 and Glu-226.

Belongs to the anthranilate phosphoribosyltransferase family. Homodimer. Mg(2+) is required as a cofactor.

It catalyses the reaction N-(5-phospho-beta-D-ribosyl)anthranilate + diphosphate = 5-phospho-alpha-D-ribose 1-diphosphate + anthranilate. The protein operates within amino-acid biosynthesis; L-tryptophan biosynthesis; L-tryptophan from chorismate: step 2/5. Functionally, catalyzes the transfer of the phosphoribosyl group of 5-phosphorylribose-1-pyrophosphate (PRPP) to anthranilate to yield N-(5'-phosphoribosyl)-anthranilate (PRA). The sequence is that of Anthranilate phosphoribosyltransferase from Dictyoglomus thermophilum (strain ATCC 35947 / DSM 3960 / H-6-12).